The primary structure comprises 344 residues: L-rhamnose-proton symporter (344 aa).

Transmembrane regions (helical) follow at residues 4–24 (AITM…CFYA), 38–58 (WSVG…ALLL), 68–88 (FSLS…IGNI), 101–121 (MGIG…TPII), 137–157 (TLLG…AGQL), 175–195 (LVLA…MNAA), 214–234 (LPSY…FCFI), 259–279 (VLLS…YAWG), 290–310 (ISWM…GLVL), and 323–343 (VLSL…IGMA).

It belongs to the L-rhamnose transporter (TC 2.A.7.6) family.

It is found in the cell inner membrane. The enzyme catalyses L-rhamnopyranose(in) + H(+)(in) = L-rhamnopyranose(out) + H(+)(out). Uptake of L-rhamnose across the cytoplasmic membrane with the concomitant transport of protons into the cell (symport system). In Shigella sonnei (strain Ss046), this protein is L-rhamnose-proton symporter.